Reading from the N-terminus, the 139-residue chain is FLYWCH family member 2 (139 aa).

Disordered stretches follow at residues 1 to 36 (MPQP…PRKP) and 86 to 139 (EAQR…STSP). Positions 98–107 (PEQKRSKQNL) are enriched in basic and acidic residues. The span at 120–130 (VSSSSSEETTV) shows a compositional bias: low complexity.

The polypeptide is FLYWCH family member 2 (Flywch2) (Mus musculus (Mouse)).